The sequence spans 123 residues: Ig heavy chain V region HPCM6 (123 aa).

An Ig-like domain is found at 1–114 (EVKLVESGGG…YPHWYFDVWG (114 aa)).

In Mus musculus (Mouse), this protein is Ig heavy chain V region HPCM6.